Reading from the N-terminus, the 411-residue chain is Cytosolic Fe-S cluster assembly factor narfl (411 aa).

5 residues coordinate [4Fe-4S] cluster: Cys11, Cys124, Cys180, Cys329, and Cys333.

Belongs to the NARF family. Component of the CIA complex.

In terms of biological role, component of the cytosolic iron-sulfur protein assembly (CIA) complex, a multiprotein complex that mediates the incorporation of iron-sulfur cluster into extramitochondrial Fe/S proteins. This chain is Cytosolic Fe-S cluster assembly factor narfl (narfl), found in Danio rerio (Zebrafish).